A 135-amino-acid polypeptide reads, in one-letter code: Sex-regulated protein janus-A (135 aa).

Lysine 37 lines the substrate pocket. Histidine 63 functions as the Proton acceptor in the catalytic mechanism. Position 104–106 (serine 104–glycine 106) interacts with substrate.

It belongs to the janus family.

Its function is as follows. JanA and janB regulate somatic sex differentiation. The protein is Sex-regulated protein janus-A (janA) of Drosophila orena (Fruit fly).